The primary structure comprises 338 residues: Holliday junction branch migration complex subunit RuvB (338 aa).

A large ATPase domain (RuvB-L) region spans residues 1-181 (MDRIVEIEKV…FGMDFRLQFY (181 aa)). ATP-binding positions include L20, R21, G62, K65, T66, T67, 128–130 (EDF), R171, Y181, and R218. Mg(2+) is bound at residue T66. Residues 182 to 252 (STAELSRIIQ…RAKEGLNALG (71 aa)) form a small ATPAse domain (RuvB-S) region. Residues 255–338 (SLGFDEMDIK…NRTKGLFDGE (84 aa)) are head domain (RuvB-H). DNA is bound by residues R309 and R314.

This sequence belongs to the RuvB family. Homohexamer. Forms an RuvA(8)-RuvB(12)-Holliday junction (HJ) complex. HJ DNA is sandwiched between 2 RuvA tetramers; dsDNA enters through RuvA and exits via RuvB. An RuvB hexamer assembles on each DNA strand where it exits the tetramer. Each RuvB hexamer is contacted by two RuvA subunits (via domain III) on 2 adjacent RuvB subunits; this complex drives branch migration. In the full resolvosome a probable DNA-RuvA(4)-RuvB(12)-RuvC(2) complex forms which resolves the HJ.

The protein resides in the cytoplasm. The catalysed reaction is ATP + H2O = ADP + phosphate + H(+). In terms of biological role, the RuvA-RuvB-RuvC complex processes Holliday junction (HJ) DNA during genetic recombination and DNA repair, while the RuvA-RuvB complex plays an important role in the rescue of blocked DNA replication forks via replication fork reversal (RFR). RuvA specifically binds to HJ cruciform DNA, conferring on it an open structure. The RuvB hexamer acts as an ATP-dependent pump, pulling dsDNA into and through the RuvAB complex. RuvB forms 2 homohexamers on either side of HJ DNA bound by 1 or 2 RuvA tetramers; 4 subunits per hexamer contact DNA at a time. Coordinated motions by a converter formed by DNA-disengaged RuvB subunits stimulates ATP hydrolysis and nucleotide exchange. Immobilization of the converter enables RuvB to convert the ATP-contained energy into a lever motion, pulling 2 nucleotides of DNA out of the RuvA tetramer per ATP hydrolyzed, thus driving DNA branch migration. The RuvB motors rotate together with the DNA substrate, which together with the progressing nucleotide cycle form the mechanistic basis for DNA recombination by continuous HJ branch migration. Branch migration allows RuvC to scan DNA until it finds its consensus sequence, where it cleaves and resolves cruciform DNA. The sequence is that of Holliday junction branch migration complex subunit RuvB from Campylobacter curvus (strain 525.92).